The sequence spans 295 residues: Aspartate carbamoyltransferase catalytic subunit (295 aa).

Carbamoyl phosphate is bound by residues arginine 54 and threonine 55. Lysine 82 serves as a coordination point for L-aspartate. Carbamoyl phosphate contacts are provided by arginine 104, histidine 132, and glutamine 135. L-aspartate is bound by residues arginine 165 and arginine 218. Carbamoyl phosphate is bound by residues glycine 257 and proline 258.

Belongs to the aspartate/ornithine carbamoyltransferase superfamily. ATCase family. Heterododecamer (2C3:3R2) of six catalytic PyrB chains organized as two trimers (C3), and six regulatory PyrI chains organized as three dimers (R2).

The catalysed reaction is carbamoyl phosphate + L-aspartate = N-carbamoyl-L-aspartate + phosphate + H(+). The protein operates within pyrimidine metabolism; UMP biosynthesis via de novo pathway; (S)-dihydroorotate from bicarbonate: step 2/3. Functionally, catalyzes the condensation of carbamoyl phosphate and aspartate to form carbamoyl aspartate and inorganic phosphate, the committed step in the de novo pyrimidine nucleotide biosynthesis pathway. This chain is Aspartate carbamoyltransferase catalytic subunit, found in Wolbachia pipientis subsp. Culex pipiens (strain wPip).